The chain runs to 276 residues: 2-dehydro-3-deoxyphosphooctonate aldolase (276 aa).

The protein belongs to the KdsA family.

The protein localises to the cytoplasm. It carries out the reaction D-arabinose 5-phosphate + phosphoenolpyruvate + H2O = 3-deoxy-alpha-D-manno-2-octulosonate-8-phosphate + phosphate. It participates in carbohydrate biosynthesis; 3-deoxy-D-manno-octulosonate biosynthesis; 3-deoxy-D-manno-octulosonate from D-ribulose 5-phosphate: step 2/3. It functions in the pathway bacterial outer membrane biogenesis; lipopolysaccharide biosynthesis. This is 2-dehydro-3-deoxyphosphooctonate aldolase from Stenotrophomonas maltophilia (strain R551-3).